A 233-amino-acid chain; its full sequence is EEF1A lysine methyltransferase 2 (233 aa).

It belongs to the class I-like SAM-binding methyltransferase superfamily. EFM4 family.

The protein localises to the cytoplasm. The protein resides in the nucleus. It catalyses the reaction L-lysyl-[protein] + 3 S-adenosyl-L-methionine = N(6),N(6),N(6)-trimethyl-L-lysyl-[protein] + 3 S-adenosyl-L-homocysteine + 3 H(+). Functionally, protein-lysine methyltransferase that selectively catalyzes the trimethylation of EEF1A at 'Lys-318'. The protein is EEF1A lysine methyltransferase 2 of Danio rerio (Zebrafish).